Here is a 199-residue protein sequence, read N- to C-terminus: NADH-quinone oxidoreductase subunit C (199 aa).

The protein belongs to the complex I 30 kDa subunit family. In terms of assembly, NDH-1 is composed of 14 different subunits. Subunits NuoB, C, D, E, F, and G constitute the peripheral sector of the complex.

Its subcellular location is the cell inner membrane. The enzyme catalyses a quinone + NADH + 5 H(+)(in) = a quinol + NAD(+) + 4 H(+)(out). Its function is as follows. NDH-1 shuttles electrons from NADH, via FMN and iron-sulfur (Fe-S) centers, to quinones in the respiratory chain. The immediate electron acceptor for the enzyme in this species is believed to be ubiquinone. Couples the redox reaction to proton translocation (for every two electrons transferred, four hydrogen ions are translocated across the cytoplasmic membrane), and thus conserves the redox energy in a proton gradient. This Roseobacter denitrificans (strain ATCC 33942 / OCh 114) (Erythrobacter sp. (strain OCh 114)) protein is NADH-quinone oxidoreductase subunit C.